The chain runs to 1171 residues: MSGKMKTMDGNAAAAWISYAFTEVAAIYPITPSTPMAENVDEWAAQGKKNLFGQPVRLMEMQSEAGAAGAVHGALQAGALTTTYTASQGLLLMIPNMYKIAGELLPGVFHVSARALATNSLNIFGDHQDVMAVRQTGCAMLAENNVQQVMDLSAVAHLAAIKGRIPFVNFFDGFRTSHEIQKIEVLEYEQLATLLDRPALDSFRRNALHPDHPVIRGTAQNPDIYFQEREAGNRFYQALPDIVESYMTQISALTGREYHLFNYTGAADAERVIIAMGSVCDTVQEVVDTLNAAGEKVGLLSVHLFRPFSLAHFFAQLPKTVQRIAVLDRTKEPGAQAEPLCLDVKNAFYHHDDAPLIVGGRYALGGKDVLPNDIAAVFDNLNKPLPMDGFTLGIVDDVTFTSLPPAQQTLAVSHDGITACKFWGMGSDGTVGANKSAIKIIGDKTPLYAQAYFSYDSKKSGGITVSHLRFGDRPINSPYLIHRADFISCSQQSYVERYDLLDGLKPGGTFLLNCSWSDAELEQHLPVGFKRYLARENIHFYTLNAVDIARELGLGGRFNMLMQAAFFKLAAIIDPQTAADYLKQAVEKSYGSKGAAVIEMNQRAIELGMASLHQVTIPAHWATLDEPAAQASAMMPDFIRDILQPMNRQCGDQLPVSAFVGMEDGTFPSGTAAWEKRGIALEVPVWQPEGCTQCNQCAFICPHAAIRPALLNGEEHDAAPVGLLSKPAQGAKEYHYHLAISPLDCSGCGNCVDICPARGKALKMQSLDSQRQMAPVWDYALALTPKSNPFRKTTVKGSQFETPLLEFSGACAGCGETPYARLITQLFGDRMLIANATGCSSIWGASAPSIPYTTNHRGHGPAWANSLFEDNAEFGLGMMLGGQAVRQQIADDMTAALALPVSDELSDAMRQWLAKQDEGEGTRERADRLSERLAAEKEGVPLLEQLWQNRDYFVRRSQWIFGGDGWAYDIGFGGLDHVLASGEDVNILVFDTEVYSNTGGQSSKSTPVAAIAKFAAQGKRTRKKDLGMMAMSYGNVYVAQVAMGADKDQTLRAIAEAEAWPGPSLVIAYAACINHGLKAGMRCSQREAKRAVEAGYWHLWRYHPQREAEGKTPFMLDSEEPEESFRDFLLGEVRYASLHKTTPHLADALFSRTEEDARARFAQYRRLAGEE.

4Fe-4S ferredoxin-type domains follow at residues 682–711 (EVPV…PALL) and 736–767 (YHLA…MQSL). Residues Cys691, Cys694, Cys697, Cys701, Cys745, Cys748, Cys751, Cys755, Cys811, Cys814, Cys839, and Cys1072 each contribute to the [4Fe-4S] cluster site.

Belongs to the pyruvate:ferredoxin/flavodoxin oxidoreductase family. Requires [4Fe-4S] cluster as cofactor.

It carries out the reaction oxidized [flavodoxin] + pyruvate + CoA + 2 H(+) = reduced [flavodoxin] + acetyl-CoA + CO2. Oxidoreductase required for the transfer of electrons from pyruvate to flavodoxin, which reduces nitrogenase. The chain is Pyruvate-flavodoxin oxidoreductase (nifJ) from Klebsiella pneumoniae.